The chain runs to 474 residues: Stabilizer of axonemal microtubules 1 (474 aa).

12 mn regions span residues 30–64 (KPCLLSEYTENYPFYHSYLPRESFKPRREYQKGPI), 65–97 (PMEGLTTSRRDFGPHKVAPVKVHQYDQFVPSEE), 98–131 (NMDLLTTYKKDYNPYPVCRVDPIKPRDSKYPCSD), 132–165 (KMECLPTYKADYLPWNQPRREPLRLEHKYQPASV), 166–199 (RFDNRTTHQDDYPIKGLVKTISCKPLAMPKLCNI), 200–232 (PLEDVTNYKMSYVAHPVEKRFVHEAEKFRPCEI), 233–266 (PFESLTTQKQSYRGLMGEPAKSLKPLARPPGLDM), 267–299 (PFCNTTEFRDKYQAWPMPRMFSKAPITYVPPED), 300–332 (RMDLLTTVQAHYTCPKGAPAQSCRPALQIKKCG), 333–366 (RFEGSSTTKDDYKQWSSMRTEPVKPVPQLDLPTE), 367–400 (PLDCLTTTRAHYVPHLPINTKSCKPHWSGPRGNV), and 401–434 (PVESQTTYTISFTPKEMGRCLASYPEPPGYTFEE). Positions 446-474 (VSQAGSQQSSHLSVDDSENPNQRELEVLA) are disordered. The segment covering 448-457 (QAGSQQSSHL) has biased composition (polar residues).

Belongs to the FAM154 family. In terms of assembly, associates with microtubules via the Mn regions. In terms of tissue distribution, widely expressed, with highest levels in testis. Expressed in mature spermatozoa (at protein level).

Its subcellular location is the cytoplasm. It localises to the cytoskeleton. It is found in the microtubule organizing center. The protein localises to the centrosome. The protein resides in the centriole. Its subcellular location is the cilium basal body. It localises to the cilium axoneme. It is found in the flagellum axoneme. In terms of biological role, may play a role in the regulation of cilium length. Stabilizes microtubules at low temperature. This Homo sapiens (Human) protein is Stabilizer of axonemal microtubules 1 (SAXO1).